Consider the following 411-residue polypeptide: LL-diaminopimelate aminotransferase (411 aa).

Substrate contacts are provided by tyrosine 15 and glycine 42. Pyridoxal 5'-phosphate is bound by residues tyrosine 72, 108–109, tyrosine 132, asparagine 187, tyrosine 218, and 246–248; these read AK and SFS. 3 residues coordinate substrate: lysine 109, tyrosine 132, and asparagine 187. Lysine 249 carries the post-translational modification N6-(pyridoxal phosphate)lysine. Pyridoxal 5'-phosphate is bound by residues arginine 257 and asparagine 292. Residues asparagine 292 and arginine 388 each contribute to the substrate site.

Belongs to the class-I pyridoxal-phosphate-dependent aminotransferase family. LL-diaminopimelate aminotransferase subfamily. As to quaternary structure, homodimer. Requires pyridoxal 5'-phosphate as cofactor.

The enzyme catalyses (2S,6S)-2,6-diaminopimelate + 2-oxoglutarate = (S)-2,3,4,5-tetrahydrodipicolinate + L-glutamate + H2O + H(+). It participates in amino-acid biosynthesis; L-lysine biosynthesis via DAP pathway; LL-2,6-diaminopimelate from (S)-tetrahydrodipicolinate (aminotransferase route): step 1/1. Involved in the synthesis of meso-diaminopimelate (m-DAP or DL-DAP), required for both lysine and peptidoglycan biosynthesis. Catalyzes the direct conversion of tetrahydrodipicolinate to LL-diaminopimelate. In Rippkaea orientalis (strain PCC 8801 / RF-1) (Cyanothece sp. (strain PCC 8801)), this protein is LL-diaminopimelate aminotransferase.